We begin with the raw amino-acid sequence, 145 residues long: D-aminoacyl-tRNA deacylase (145 aa).

The Gly-cisPro motif, important for rejection of L-amino acids signature appears at 137-138 (GP).

The protein belongs to the DTD family. In terms of assembly, homodimer.

It is found in the cytoplasm. It catalyses the reaction glycyl-tRNA(Ala) + H2O = tRNA(Ala) + glycine + H(+). The catalysed reaction is a D-aminoacyl-tRNA + H2O = a tRNA + a D-alpha-amino acid + H(+). Its function is as follows. An aminoacyl-tRNA editing enzyme that deacylates mischarged D-aminoacyl-tRNAs. Also deacylates mischarged glycyl-tRNA(Ala), protecting cells against glycine mischarging by AlaRS. Acts via tRNA-based rather than protein-based catalysis; rejects L-amino acids rather than detecting D-amino acids in the active site. By recycling D-aminoacyl-tRNA to D-amino acids and free tRNA molecules, this enzyme counteracts the toxicity associated with the formation of D-aminoacyl-tRNA entities in vivo and helps enforce protein L-homochirality. This Citrobacter koseri (strain ATCC BAA-895 / CDC 4225-83 / SGSC4696) protein is D-aminoacyl-tRNA deacylase.